The sequence spans 324 residues: Glutathione synthetase (324 aa).

In terms of domain architecture, ATP-grasp spans 133-317 (KMYALQFTKA…LAHQVIQWVE (185 aa)). 159–215 (VEAKGATVLKPLGNKAGEGILFLQAGDRNFNSIVELSTQQGRLPVMVQTYLPEAKEG) is a binding site for ATP. Residues E288 and N290 each contribute to the Mg(2+) site.

The protein belongs to the prokaryotic GSH synthase family. The cofactor is Mg(2+). It depends on Mn(2+) as a cofactor.

The enzyme catalyses gamma-L-glutamyl-L-cysteine + glycine + ATP = glutathione + ADP + phosphate + H(+). Its pathway is sulfur metabolism; glutathione biosynthesis; glutathione from L-cysteine and L-glutamate: step 2/2. In Nostoc sp. (strain PCC 7120 / SAG 25.82 / UTEX 2576), this protein is Glutathione synthetase.